The chain runs to 444 residues: Argininosuccinate synthase (444 aa).

ATP contacts are provided by residues 17-25 and alanine 43; that span reads AFSGGLDTS. L-citrulline is bound at residue tyrosine 99. 2 residues coordinate ATP: glycine 129 and threonine 131. L-aspartate is bound by residues threonine 131, asparagine 135, and aspartate 136. Asparagine 135 provides a ligand contact to L-citrulline. An ATP-binding site is contributed by aspartate 136. 2 residues coordinate L-citrulline: arginine 139 and serine 192. Residue aspartate 194 coordinates ATP. L-citrulline is bound by residues threonine 201, glutamate 203, and glutamate 280.

This sequence belongs to the argininosuccinate synthase family. Type 2 subfamily. In terms of assembly, homotetramer.

The protein localises to the cytoplasm. It carries out the reaction L-citrulline + L-aspartate + ATP = 2-(N(omega)-L-arginino)succinate + AMP + diphosphate + H(+). It functions in the pathway amino-acid biosynthesis; L-arginine biosynthesis; L-arginine from L-ornithine and carbamoyl phosphate: step 2/3. This chain is Argininosuccinate synthase, found in Delftia acidovorans (strain DSM 14801 / SPH-1).